Consider the following 388-residue polypeptide: S-adenosylmethionine synthase (388 aa).

Residue H16 participates in ATP binding. D18 contacts Mg(2+). E44 contacts K(+). L-methionine is bound by residues E57 and Q100. The tract at residues 100–110 (QSPDIAQGVDK) is flexible loop. Residues 167 to 169 (DAK), 233 to 234 (RF), D242, 248 to 249 (RK), A265, and K269 contribute to the ATP site. D242 serves as a coordination point for L-methionine. K273 is an L-methionine binding site.

The protein belongs to the AdoMet synthase family. As to quaternary structure, homotetramer; dimer of dimers. Mg(2+) is required as a cofactor. Requires K(+) as cofactor.

It is found in the cytoplasm. The catalysed reaction is L-methionine + ATP + H2O = S-adenosyl-L-methionine + phosphate + diphosphate. The protein operates within amino-acid biosynthesis; S-adenosyl-L-methionine biosynthesis; S-adenosyl-L-methionine from L-methionine: step 1/1. Its function is as follows. Catalyzes the formation of S-adenosylmethionine (AdoMet) from methionine and ATP. The overall synthetic reaction is composed of two sequential steps, AdoMet formation and the subsequent tripolyphosphate hydrolysis which occurs prior to release of AdoMet from the enzyme. The protein is S-adenosylmethionine synthase of Polynucleobacter necessarius subsp. necessarius (strain STIR1).